The chain runs to 295 residues: Zygote arrest protein 1.S (295 aa).

Disordered stretches follow at residues 80-115 (SVQC…TKTV) and 144-186 (EKGE…APAQ). Over residues 144-176 (EKGEAVRSEGSEGGRQEGKQGDGEIKEQMKMDK) the composition is skewed to basic and acidic residues. Residues 197 to 280 (KYGYYHCKDC…RQDLCGRCKG (84 aa)) form a 3CxxC-type zinc finger.

It belongs to the ZAR1 family. As to expression, ovary. Also expressed in lung and muscle.

The protein resides in the cytoplasm. The protein localises to the cytoplasmic ribonucleoprotein granule. Its function is as follows. mRNA-binding protein required for maternal mRNA storage, translation and degradation during oocyte maturation. Probably promotes formation of some phase-separated membraneless compartment that stores maternal mRNAs in oocytes: acts by undergoing liquid-liquid phase separation upon binding to maternal mRNAs. Binds to the 3'-UTR of maternal mRNAs in immature oocytes, inhibiting their translation. This is Zygote arrest protein 1.S (zar1.S) from Xenopus laevis (African clawed frog).